A 343-amino-acid chain; its full sequence is Dihydroorotase (343 aa).

Residues H14 and H16 each coordinate Zn(2+). Residues 16-18 and N42 each bind substrate; that span reads HVR. Positions 99, 136, and 174 each coordinate Zn(2+). K99 is subject to N6-carboxylysine. H136 is a binding site for substrate. L219 lines the substrate pocket. Residue D247 coordinates Zn(2+). Residue D247 is part of the active site. Residues H251 and A263 each coordinate substrate.

The protein belongs to the metallo-dependent hydrolases superfamily. DHOase family. Class II DHOase subfamily. As to quaternary structure, homodimer. It depends on Zn(2+) as a cofactor.

The catalysed reaction is (S)-dihydroorotate + H2O = N-carbamoyl-L-aspartate + H(+). It participates in pyrimidine metabolism; UMP biosynthesis via de novo pathway; (S)-dihydroorotate from bicarbonate: step 3/3. Its function is as follows. Catalyzes the reversible cyclization of carbamoyl aspartate to dihydroorotate. This Variovorax paradoxus (strain S110) protein is Dihydroorotase.